The sequence spans 624 residues: Coagulation factor XI (624 aa).

Positions 1–18 (MTSLHQVLYFIFFASVSS) are cleaved as a signal peptide. Apple domains lie at 20-103 (CVTK…FKQC), 110-193 (CSKD…LKSC), 200-283 (CIRD…LQHC), and 291-376 (CHPS…LRLC). Intrachain disulfides connect C20–C103, C46–C76, C50–C56, C110–C193, C136–C165, C140–C146, C200–C283, C226–C255, C230–C236, C291–C376, C317–C348, C321–C327, C382–C499, C415–C431, C513–C580, C544–C559, and C570–C598. N-linked (GlcNAc...) asparagine glycans are attached at residues N90 and N126. N-linked (GlcNAc...) asparagine glycosylation is present at N297. Residues 390 to 622 (VVGGAASVHG…YVDWILEKTQ (233 aa)) form the Peptidase S1 domain. H430 serves as the catalytic Charge relay system. A glycan (N-linked (GlcNAc...) asparagine) is linked at N449. Residue D479 is the Charge relay system of the active site. An N-linked (GlcNAc...) asparagine glycan is attached at N490. 547 to 550 (RYRR) contributes to the heparin binding site. S574 acts as the Charge relay system in catalysis.

The protein belongs to the peptidase S1 family. Plasma kallikrein subfamily. Homodimer; disulfide-linked. After activation the heavy and light chains are also linked by a disulfide bond. Interacts (activated) with F9 (inactive and activated) in calcium-dependent manner. Forms a heterodimer with SERPINA5. Activated by factor XIIa (or XII), which cleaves each polypeptide after Arg-389 into the light chain, which contains the active site, and the heavy chain, which associates with high molecular weight (HMW) kininogen. Activated by F12 (activated); the presence of negatively charged surfaces accelerates activation. Activated by F2 (thrombin); the presence of negatively charged surfaces, such as polyphosphate and dextran sulfate, strongly accelerates activation. Autoactivated; the presence of negatively charged surfaces, such as polyphosphate and dextran sulfate, accelerates autoactivation and autolysis. Post-translationally, N-glycosylated on both chains. N-glycosylated sites mainly consist of nonfucosylated sialylated biantennary (in high abundance) and/or triantennary (in low abundance) complex structures.

It is found in the secreted. The enzyme catalyses Selective cleavage of Arg-|-Ala and Arg-|-Val bonds in factor IX to form factor IXa.. With respect to regulation, inhibited by SERPINA5. In terms of biological role, factor XI triggers the middle phase of the intrinsic pathway of blood coagulation by activating factor IX. This Mus musculus (Mouse) protein is Coagulation factor XI (F11).